The following is a 465-amino-acid chain: ATP-dependent protease ATPase subunit HslU (465 aa).

ATP-binding positions include Val-20, 62-67 (GVGKTE), Asp-277, Glu-343, and Arg-415.

The protein belongs to the ClpX chaperone family. HslU subfamily. As to quaternary structure, a double ring-shaped homohexamer of HslV is capped on each side by a ring-shaped HslU homohexamer. The assembly of the HslU/HslV complex is dependent on binding of ATP.

The protein resides in the cytoplasm. ATPase subunit of a proteasome-like degradation complex; this subunit has chaperone activity. The binding of ATP and its subsequent hydrolysis by HslU are essential for unfolding of protein substrates subsequently hydrolyzed by HslV. HslU recognizes the N-terminal part of its protein substrates and unfolds these before they are guided to HslV for hydrolysis. This is ATP-dependent protease ATPase subunit HslU from Geobacillus kaustophilus (strain HTA426).